The chain runs to 357 residues: Uroporphyrinogen decarboxylase (357 aa).

Residues Arg27 to Arg31, Asp77, Tyr154, Ser209, and His330 each bind substrate.

The protein belongs to the uroporphyrinogen decarboxylase family. In terms of assembly, homodimer.

Its subcellular location is the cytoplasm. The enzyme catalyses uroporphyrinogen III + 4 H(+) = coproporphyrinogen III + 4 CO2. It functions in the pathway porphyrin-containing compound metabolism; protoporphyrin-IX biosynthesis; coproporphyrinogen-III from 5-aminolevulinate: step 4/4. In terms of biological role, catalyzes the decarboxylation of four acetate groups of uroporphyrinogen-III to yield coproporphyrinogen-III. This chain is Uroporphyrinogen decarboxylase, found in Acinetobacter baumannii (strain ATCC 17978 / DSM 105126 / CIP 53.77 / LMG 1025 / NCDC KC755 / 5377).